Here is a 500-residue protein sequence, read N- to C-terminus: NAD(P)H-quinone oxidoreductase chain 4, chloroplastic (500 aa).

14 helical membrane-spanning segments follow: residues 4–24, 35–55, 87–107, 113–130, 134–154, 167–187, 211–231, 242–262, 272–292, 305–325, 330–350, 386–406, 416–436, and 462–482; these read FPWL…MLFL, YTIC…CYNF, IGTI…AFPV, LFHF…GSFS, LLLF…LLSM, FILY…GISL, ILFY…IPLH, HYST…YGLV, AHSM…IYAA, IAYS…SITD, GAIL…FLAG, LALP…GIIT, ILII…LLSM, and LFLS…PDFV.

The protein belongs to the complex I subunit 4 family.

The protein resides in the plastid. The protein localises to the chloroplast thylakoid membrane. It carries out the reaction a plastoquinone + NADH + (n+1) H(+)(in) = a plastoquinol + NAD(+) + n H(+)(out). The enzyme catalyses a plastoquinone + NADPH + (n+1) H(+)(in) = a plastoquinol + NADP(+) + n H(+)(out). The protein is NAD(P)H-quinone oxidoreductase chain 4, chloroplastic of Olimarabidopsis pumila (Dwarf rocket).